A 331-amino-acid polypeptide reads, in one-letter code: Cytosolic sulfotransferase 1 (331 aa).

Residue 74–79 (KSGTTW) participates in 3'-phosphoadenylyl sulfate binding. Residue His143 is the Proton acceptor of the active site. 3'-phosphoadenylyl sulfate-binding positions include Arg165, Ser173, Tyr231, and 297–299 (RKG).

The protein belongs to the sulfotransferase 1 family.

Its subcellular location is the cytoplasm. Its function is as follows. Sulfotransferase that utilizes 3'-phospho-5'-adenylyl sulfate (PAPS) as sulfonate donor. The protein is Cytosolic sulfotransferase 1 (SOT1) of Arabidopsis thaliana (Mouse-ear cress).